Consider the following 774-residue polypeptide: Vezatin (774 aa).

The next 2 membrane-spanning stretches (helical) occupy residues 138–158 (IATP…AVAA) and 163–183 (SISS…FTVL). Positions 430–457 (VRSLQLHLKALLNEVIVLEDELDKLSSC) form a coiled coil. Acidic residues predominate over residues 746-757 (FGDEWDDDDDNE). Residues 746 to 774 (FGDEWDDDDDNEDHDHDKERNNDSSQLEG) are disordered. Residues 758-767 (DHDHDKERNN) show a composition bias toward basic and acidic residues.

This sequence belongs to the vezatin family. Interacts with myosin VIIa and the cadherin-catenins complex.

Its subcellular location is the cell membrane. It is found in the cell junction. The protein localises to the adherens junction. It localises to the nucleus. In terms of biological role, plays a pivotal role in the establishment of adherens junctions and their maintenance in adult life. The polypeptide is Vezatin (vezt) (Xenopus laevis (African clawed frog)).